A 301-amino-acid polypeptide reads, in one-letter code: 3-methyl-2-oxobutanoate hydroxymethyltransferase (301 aa).

A compositionally biased stretch (low complexity) spans 1–28 (MATSNSSDSSMSAEVPAPYGNGPANAPA). Residues 1 to 37 (MATSNSSDSSMSAEVPAPYGNGPANAPATPSDTAKKP) form a disordered region. 2 residues coordinate Mg(2+): Asp82 and Asp121. Residues 82–83 (DS), Asp121, and Lys151 each bind 3-methyl-2-oxobutanoate. Glu153 provides a ligand contact to Mg(2+). Residue Glu219 is the Proton acceptor of the active site.

Belongs to the PanB family. In terms of assembly, homodecamer; pentamer of dimers. Requires Mg(2+) as cofactor.

The protein localises to the cytoplasm. It catalyses the reaction 3-methyl-2-oxobutanoate + (6R)-5,10-methylene-5,6,7,8-tetrahydrofolate + H2O = 2-dehydropantoate + (6S)-5,6,7,8-tetrahydrofolate. The protein operates within cofactor biosynthesis; (R)-pantothenate biosynthesis; (R)-pantoate from 3-methyl-2-oxobutanoate: step 1/2. Catalyzes the reversible reaction in which hydroxymethyl group from 5,10-methylenetetrahydrofolate is transferred onto alpha-ketoisovalerate to form ketopantoate. This Arthrobacter sp. (strain FB24) protein is 3-methyl-2-oxobutanoate hydroxymethyltransferase.